Here is a 669-residue protein sequence, read N- to C-terminus: DNA ligase (669 aa).

Residues 31 to 35 (DSVYD), 80 to 81 (SL), and E112 contribute to the NAD(+) site. Residue K114 is the N6-AMP-lysine intermediate of the active site. 4 residues coordinate NAD(+): R135, E172, K289, and K313. Zn(2+) contacts are provided by C407, C410, C425, and C430. Positions 591–669 (TDSGKLKGKT…EAEFLQLLEP (79 aa)) constitute a BRCT domain.

Belongs to the NAD-dependent DNA ligase family. LigA subfamily. Mg(2+) is required as a cofactor. Mn(2+) serves as cofactor.

It carries out the reaction NAD(+) + (deoxyribonucleotide)n-3'-hydroxyl + 5'-phospho-(deoxyribonucleotide)m = (deoxyribonucleotide)n+m + AMP + beta-nicotinamide D-nucleotide.. Functionally, DNA ligase that catalyzes the formation of phosphodiester linkages between 5'-phosphoryl and 3'-hydroxyl groups in double-stranded DNA using NAD as a coenzyme and as the energy source for the reaction. It is essential for DNA replication and repair of damaged DNA. In Synechocystis sp. (strain ATCC 27184 / PCC 6803 / Kazusa), this protein is DNA ligase.